The primary structure comprises 157 residues: D-aminoacyl-tRNA deacylase (157 aa).

The Gly-cisPro motif, important for rejection of L-amino acids signature appears at 137-138 (GP).

It belongs to the DTD family. Homodimer.

Its subcellular location is the cytoplasm. The catalysed reaction is glycyl-tRNA(Ala) + H2O = tRNA(Ala) + glycine + H(+). The enzyme catalyses a D-aminoacyl-tRNA + H2O = a tRNA + a D-alpha-amino acid + H(+). An aminoacyl-tRNA editing enzyme that deacylates mischarged D-aminoacyl-tRNAs. Also deacylates mischarged glycyl-tRNA(Ala), protecting cells against glycine mischarging by AlaRS. Acts via tRNA-based rather than protein-based catalysis; rejects L-amino acids rather than detecting D-amino acids in the active site. By recycling D-aminoacyl-tRNA to D-amino acids and free tRNA molecules, this enzyme counteracts the toxicity associated with the formation of D-aminoacyl-tRNA entities in vivo and helps enforce protein L-homochirality. The chain is D-aminoacyl-tRNA deacylase from Roseiflexus castenholzii (strain DSM 13941 / HLO8).